A 138-amino-acid polypeptide reads, in one-letter code: Phosphoribosyl-AMP cyclohydrolase (138 aa).

D86 provides a ligand contact to Mg(2+). A Zn(2+)-binding site is contributed by C87. D88 and D90 together coordinate Mg(2+). Zn(2+) is bound by residues C104 and C111.

Belongs to the PRA-CH family. In terms of assembly, homodimer. Mg(2+) is required as a cofactor. Zn(2+) serves as cofactor.

Its subcellular location is the cytoplasm. The enzyme catalyses 1-(5-phospho-beta-D-ribosyl)-5'-AMP + H2O = 1-(5-phospho-beta-D-ribosyl)-5-[(5-phospho-beta-D-ribosylamino)methylideneamino]imidazole-4-carboxamide. The protein operates within amino-acid biosynthesis; L-histidine biosynthesis; L-histidine from 5-phospho-alpha-D-ribose 1-diphosphate: step 3/9. Its function is as follows. Catalyzes the hydrolysis of the adenine ring of phosphoribosyl-AMP. This is Phosphoribosyl-AMP cyclohydrolase from Marinobacter nauticus (strain ATCC 700491 / DSM 11845 / VT8) (Marinobacter aquaeolei).